Consider the following 269-residue polypeptide: tRNA pseudouridine synthase A (269 aa).

The active-site Nucleophile is Asp55. Residue Tyr111 coordinates substrate.

Belongs to the tRNA pseudouridine synthase TruA family.

It catalyses the reaction uridine(38/39/40) in tRNA = pseudouridine(38/39/40) in tRNA. Its function is as follows. Formation of pseudouridine at positions 38, 39 and 40 in the anticodon stem and loop of transfer RNAs. The chain is tRNA pseudouridine synthase A from Methanosarcina acetivorans (strain ATCC 35395 / DSM 2834 / JCM 12185 / C2A).